A 352-amino-acid polypeptide reads, in one-letter code: Selenide, water dikinase (352 aa).

The active site involves cysteine 23. ATP contacts are provided by residues lysine 26 and 54 to 56 (SRD). Aspartate 57 lines the Mg(2+) pocket. ATP-binding positions include aspartate 74, aspartate 97, and 145 to 147 (GHS). Aspartate 97 is a Mg(2+) binding site. Aspartate 233 contacts Mg(2+).

This sequence belongs to the selenophosphate synthase 1 family. Class I subfamily. In terms of assembly, homodimer. The cofactor is Mg(2+).

It carries out the reaction hydrogenselenide + ATP + H2O = selenophosphate + AMP + phosphate + 2 H(+). Its function is as follows. Synthesizes selenophosphate from selenide and ATP. The polypeptide is Selenide, water dikinase (Shewanella baltica (strain OS155 / ATCC BAA-1091)).